A 237-amino-acid polypeptide reads, in one-letter code: Phosphoribosylaminoimidazole-succinocarboxamide synthase (237 aa).

It belongs to the SAICAR synthetase family.

It carries out the reaction 5-amino-1-(5-phospho-D-ribosyl)imidazole-4-carboxylate + L-aspartate + ATP = (2S)-2-[5-amino-1-(5-phospho-beta-D-ribosyl)imidazole-4-carboxamido]succinate + ADP + phosphate + 2 H(+). The protein operates within purine metabolism; IMP biosynthesis via de novo pathway; 5-amino-1-(5-phospho-D-ribosyl)imidazole-4-carboxamide from 5-amino-1-(5-phospho-D-ribosyl)imidazole-4-carboxylate: step 1/2. This is Phosphoribosylaminoimidazole-succinocarboxamide synthase from Salmonella arizonae (strain ATCC BAA-731 / CDC346-86 / RSK2980).